A 186-amino-acid polypeptide reads, in one-letter code: FMN-dependent NADH:quinone oxidoreductase 1 (186 aa).

FMN is bound by residues 15-17 (SVS) and 81-84 (MYNF).

It belongs to the azoreductase type 1 family. In terms of assembly, homodimer. It depends on FMN as a cofactor.

It carries out the reaction 2 a quinone + NADH + H(+) = 2 a 1,4-benzosemiquinone + NAD(+). The catalysed reaction is N,N-dimethyl-1,4-phenylenediamine + anthranilate + 2 NAD(+) = 2-(4-dimethylaminophenyl)diazenylbenzoate + 2 NADH + 2 H(+). Its function is as follows. Quinone reductase that provides resistance to thiol-specific stress caused by electrophilic quinones. In terms of biological role, also exhibits azoreductase activity. Catalyzes the reductive cleavage of the azo bond in aromatic azo compounds to the corresponding amines. The chain is FMN-dependent NADH:quinone oxidoreductase 1 from Idiomarina loihiensis (strain ATCC BAA-735 / DSM 15497 / L2-TR).